A 227-amino-acid polypeptide reads, in one-letter code: Germin-like protein 3-5 (227 aa).

Positions 1–29 (MEYGFKAAGLVFVVLLLQQAPVLIRATDA) are cleaved as a signal peptide. An intrachain disulfide couples cysteine 36 to cysteine 51. In terms of domain architecture, Cupin type-1 spans 65–217 (SKIATGGDVN…ALRVDAGVVE (153 aa)). 2 N-linked (GlcNAc...) asparagine glycosylation sites follow: asparagine 78 and asparagine 81. Residues histidine 114, histidine 116, glutamate 121, and histidine 163 each coordinate Mn(2+).

Belongs to the germin family. In terms of assembly, oligomer (believed to be a pentamer but probably hexamer).

It is found in the secreted. The protein localises to the extracellular space. It localises to the apoplast. May play a role in plant defense. Probably has no oxalate oxidase activity even if the active site is conserved. The sequence is that of Germin-like protein 3-5 from Oryza sativa subsp. japonica (Rice).